The primary structure comprises 403 residues: MISQNIIKIIQKSNKRYFSSSNELKKTALNELHKELGAKMVPFCGWEMPVQYPAGVMKEHLHVRKESGLFDVSHMGQLRIHGKDRVKFFESIVVADLQALPTGHSKLSVFTNEKGGIIDDTMITNAGDSLYVVVNAGCADKDISHINEKIKEFKSVNPTHDVSMQLLEDLSLIAIQGPTTESILQKFVKDQDITNMEFMTQRPMTIAGIDCIVTRCGYTGEDGFEISVPSKQAVRLAELFLATSNASIESGIKPAGLGARDSLRLEAGLCLYGHDLNDDITPIEASLNWLISKRRREEGGFPGASIIQKQLQKDGCPQKRVGVIINGAPAREGCLILDPSTNQEIGKVTSGTISPITRQSISMAYVKTPFSKIGTQVNVSIRGKPITATISKMPFVPTNYKKL.

The transit peptide at 1–25 (MISQNIIKIIQKSNKRYFSSSNELK) directs the protein to the mitochondrion. The substrate site is built by Glu225, Arg260, and Tyr400.

Belongs to the GcvT family. The glycine cleavage system is composed of four proteins: P, T, L and H.

The protein resides in the mitochondrion. The catalysed reaction is N(6)-[(R)-S(8)-aminomethyldihydrolipoyl]-L-lysyl-[protein] + (6S)-5,6,7,8-tetrahydrofolate = N(6)-[(R)-dihydrolipoyl]-L-lysyl-[protein] + (6R)-5,10-methylene-5,6,7,8-tetrahydrofolate + NH4(+). In terms of biological role, the glycine cleavage system catalyzes the degradation of glycine. The polypeptide is Aminomethyltransferase, mitochondrial (gcvT) (Dictyostelium discoideum (Social amoeba)).